We begin with the raw amino-acid sequence, 358 residues long: Heme A synthase (358 aa).

Helical transmembrane passes span 22–42, 107–127, 133–153, 172–192, 208–228, 269–289, 302–322, and 324–344; these read IQVWLYSILLLCLAIVLVGGA, VLGRLVGLVALLGLIWFWATK, ILFPLIVVPILIAFQGFIGWW, LAFHLITACLVIIFVTYLSRG, FAAWLVILVLIEIYLGALVAG, FIHRFFAYFLFIVSALHAFYV, AFLIFFIIIIQAILGILTLLH, and VPISLGLIHQSMALVVLCFAV. His-271 serves as a coordination point for heme. His-332 is a binding site for heme.

The protein belongs to the COX15/CtaA family. Type 2 subfamily. As to quaternary structure, interacts with CtaB. It depends on heme b as a cofactor.

Its subcellular location is the cell membrane. It catalyses the reaction Fe(II)-heme o + 2 A + H2O = Fe(II)-heme a + 2 AH2. Its pathway is porphyrin-containing compound metabolism; heme A biosynthesis; heme A from heme O: step 1/1. In terms of biological role, catalyzes the conversion of heme O to heme A by two successive hydroxylations of the methyl group at C8. The first hydroxylation forms heme I, the second hydroxylation results in an unstable dihydroxymethyl group, which spontaneously dehydrates, resulting in the formyl group of heme A. The polypeptide is Heme A synthase (Bartonella tribocorum (strain CIP 105476 / IBS 506)).